The primary structure comprises 540 residues: Transcription initiation factor IIF subunit alpha (540 aa).

A compositionally biased stretch (basic and acidic residues) spans Met-1 to Glu-26. 2 disordered regions span residues Met-1–Gln-39 and Ile-70–Asn-106. Composition is skewed to polar residues over residues Ser-29–Gln-39 and Ala-89–Asn-106. Ser-259 and Ser-261 each carry phosphoserine. The stretch at Met-280 to Ser-382 forms a coiled coil. Residues Tyr-341 to Ser-416 are disordered. The span at Ser-359–Glu-369 shows a compositional bias: acidic residues. Positions Phe-381–Ser-416 are enriched in polar residues. Ser-399 carries the phosphoserine modification.

It belongs to the TFIIF alpha subunit family. Component of the fcp1/TFIIF/polII complex via interaction of tfg3 with both tfg1/TFIIF-alpha and tfg2/TFIIF-beta subunits.

Its subcellular location is the nucleus. Its function is as follows. TFIIF is a general transcription initiation factor that binds to RNA polymerase II and helps to recruit it to the initiation complex in collaboration with TFIIB. It promotes transcription elongation. The chain is Transcription initiation factor IIF subunit alpha (tfg1) from Schizosaccharomyces pombe (strain 972 / ATCC 24843) (Fission yeast).